The primary structure comprises 422 residues: Alcohol dehydrogenase 4 (422 aa).

Residues 1–29 (MSILRSPFRLIRSPARFFPSLFHSSCNQS) constitute a mitochondrion transit peptide. NAD(+) contacts are provided by Asp-82, Asn-114, Gly-141, Ser-142, Thr-181, Thr-182, Thr-190, Phe-192, Lys-203, and Gly-225. Residues Asp-237, His-241, and His-306 each contribute to the Fe(2+) site. NAD(+)-binding residues include His-310 and His-320. His-320 is a binding site for Fe(2+).

The protein belongs to the iron-containing alcohol dehydrogenase family. Zn(2+) is required as a cofactor.

The protein resides in the mitochondrion matrix. The catalysed reaction is a primary alcohol + NAD(+) = an aldehyde + NADH + H(+). The enzyme catalyses a secondary alcohol + NAD(+) = a ketone + NADH + H(+). It catalyses the reaction ethanol + NAD(+) = acetaldehyde + NADH + H(+). Involved in ethanol oxidation in mitochondria. The chain is Alcohol dehydrogenase 4 (adh4) from Schizosaccharomyces pombe (strain 972 / ATCC 24843) (Fission yeast).